A 304-amino-acid polypeptide reads, in one-letter code: Probable WRKY transcription factor 29 (304 aa).

Disordered stretches follow at residues 76–96 (LPED…GCLL) and 185–236 (YTNE…IPSA). The span at 78–88 (EDSKPFRDDKK) shows a compositional bias: basic and acidic residues. Positions 128 to 194 (KEENLLSDAW…YTNEHNHELP (67 aa)) form a DNA-binding region, WRKY. Composition is skewed to polar residues over residues 196-213 (RRNS…QPKP) and 225-236 (SSPTSNPMIPSA).

It belongs to the WRKY group II-e family.

The protein resides in the nucleus. Transcription factor involved in the expression of defense genes in innate immune response of plants. Interacts specifically with the W box (5'-(T)TGAC[CT]-3'), a frequently occurring elicitor-responsive cis-acting element. Activates WRKY 22, SIRK and its own promoters. In Arabidopsis thaliana (Mouse-ear cress), this protein is Probable WRKY transcription factor 29 (WRKY29).